A 215-amino-acid polypeptide reads, in one-letter code: Protein FAM167A (215 aa).

Disordered regions lie at residues 1 to 26 and 63 to 109; these read MSVP…PPDD and RPAA…LTTG. The stretch at 124 to 157 forms a coiled coil; it reads LRKELAEMRLQDQQLARQLMRLRGDINKLKIEQT.

The protein belongs to the FAM167 (SEC) family.

This is Protein FAM167A (Fam167a) from Mus musculus (Mouse).